Reading from the N-terminus, the 118-residue chain is Ribulose bisphosphate carboxylase small subunit (118 aa).

The protein belongs to the RuBisCO small chain family. As to quaternary structure, heterohexadecamer of 8 large and 8 small subunits.

Its function is as follows. RuBisCO catalyzes two reactions: the carboxylation of D-ribulose 1,5-bisphosphate, the primary event in carbon dioxide fixation, as well as the oxidative fragmentation of the pentose substrate. Both reactions occur simultaneously and in competition at the same active site. Although the small subunit is not catalytic it is essential for maximal activity. This chain is Ribulose bisphosphate carboxylase small subunit, found in Thiobacillus denitrificans (strain ATCC 25259 / T1).